The following is a 226-amino-acid chain: MDLINQIKNTLIVSCQAIGDEPLNDSYVLSKMAYALVLGGSKVLRLSQVEHIKAVKQVVDVPIIGLIKKHYDNSEVFITPTIKEVDQLVDLKVDIIALDATLRTRPDQDLTNLVKTIKTKYPNQLLLADCSSVEDAINAQNLGFDLIASTLRGSTKQTKGHNNLENNYQFLRDLKKVITKPIIAEGGIWTPQQAKEILNLGIHSVVVGTAITRLHSIVKYWNDILK.

Belongs to the NanE family.

It catalyses the reaction an N-acyl-D-glucosamine 6-phosphate = an N-acyl-D-mannosamine 6-phosphate. The protein operates within amino-sugar metabolism; N-acetylneuraminate degradation; D-fructose 6-phosphate from N-acetylneuraminate: step 3/5. In terms of biological role, converts N-acetylmannosamine-6-phosphate (ManNAc-6-P) to N-acetylglucosamine-6-phosphate (GlcNAc-6-P). The sequence is that of Putative N-acetylmannosamine-6-phosphate 2-epimerase from Mycoplasma capricolum subsp. capricolum (strain California kid / ATCC 27343 / NCTC 10154).